The primary structure comprises 30 residues: Thermophilic aminopeptidase 1 alpha chain (30 aa).

It belongs to the peptidase M42 family. As to quaternary structure, 12 chains of two different but homologous types, alpha and beta, which can combine in various ratios. Requires a divalent metal cation as cofactor.

Functionally, metalloenzyme of broad specificity, releasing all N-terminal amino acids. This chain is Thermophilic aminopeptidase 1 alpha chain, found in Geobacillus stearothermophilus (Bacillus stearothermophilus).